The chain runs to 236 residues: Small ribosomal subunit protein uS2c (236 aa).

It belongs to the universal ribosomal protein uS2 family.

It localises to the plastid. The protein resides in the chloroplast. This chain is Small ribosomal subunit protein uS2c (rps2), found in Guizotia abyssinica (Niger).